The following is a 126-amino-acid chain: Glycine cleavage system H protein (126 aa).

Residues 21–103 (TATIGISEHA…YEGGWIVKVK (83 aa)) enclose the Lipoyl-binding domain. An N6-lipoyllysine modification is found at Lys62.

It belongs to the GcvH family. The glycine cleavage system is composed of four proteins: P, T, L and H. (R)-lipoate serves as cofactor.

The glycine cleavage system catalyzes the degradation of glycine. The H protein shuttles the methylamine group of glycine from the P protein to the T protein. This chain is Glycine cleavage system H protein, found in Vibrio campbellii (strain ATCC BAA-1116).